The sequence spans 249 residues: 5'-nucleotidase SurE (249 aa).

A divalent metal cation-binding residues include Asp-8, Asp-9, Ser-39, and Asn-91.

This sequence belongs to the SurE nucleotidase family. Requires a divalent metal cation as cofactor.

The protein resides in the cytoplasm. It carries out the reaction a ribonucleoside 5'-phosphate + H2O = a ribonucleoside + phosphate. Functionally, nucleotidase that shows phosphatase activity on nucleoside 5'-monophosphates. This is 5'-nucleotidase SurE from Pseudomonas syringae pv. tomato (strain ATCC BAA-871 / DC3000).